Here is a 472-residue protein sequence, read N- to C-terminus: Poly(A) polymerase catalytic subunit (472 aa).

Residues D191 and D193 contribute to the active site.

It belongs to the poxviridae poly(A) polymerase catalytic subunit family. Heterodimer of a large (catalytic) subunit and a small (regulatory) subunit.

It carries out the reaction RNA(n) + ATP = RNA(n)-3'-adenine ribonucleotide + diphosphate. In terms of biological role, polymerase that creates the 3'-poly(A) tail of mRNA's. The polypeptide is Poly(A) polymerase catalytic subunit (PAPL) (Capra hircus (Goat)).